We begin with the raw amino-acid sequence, 229 residues long: Large ribosomal subunit protein bL19cy (229 aa).

The transit peptide at 1 to 70 (MATSSHLLPQ…DSKKRKEFIA (70 aa)) directs the protein to the chloroplast.

This sequence belongs to the bacterial ribosomal protein bL19 family. Part of the 50S ribosomal subunit.

It is found in the plastid. The protein resides in the chloroplast. Its function is as follows. Located at the 30S-50S ribosomal subunit interface and binds directly to 23S ribosomal RNA. The sequence is that of Large ribosomal subunit protein bL19cy from Arabidopsis thaliana (Mouse-ear cress).